The following is a 212-amino-acid chain: NADH dehydrogenase [ubiquinone] iron-sulfur protein 8, mitochondrial (212 aa).

A mitochondrion-targeting transit peptide spans 1-34 (MYRLSSSMLPRALAQAMRTGHLNGQSLHSSAVAA). 2 4Fe-4S ferredoxin-type domains span residues 104 to 133 (RRYP…IEAE) and 143 to 172 (TRYD…EGPN). Residues Cys113, Cys116, Cys119, Cys123, Cys152, Cys155, Cys158, and Cys162 each coordinate [4Fe-4S] cluster.

Belongs to the complex I 23 kDa subunit family. In terms of assembly, complex I is composed of 45 different subunits. This is a component of the iron-sulfur (IP) fragment of the enzyme. Interacts with RAB5IF. Requires [4Fe-4S] cluster as cofactor.

It localises to the mitochondrion inner membrane. It catalyses the reaction a ubiquinone + NADH + 5 H(+)(in) = a ubiquinol + NAD(+) + 4 H(+)(out). In terms of biological role, core subunit of the mitochondrial membrane respiratory chain NADH dehydrogenase (Complex I) which catalyzes electron transfer from NADH through the respiratory chain, using ubiquinone as an electron acceptor. Essential for the catalytic activity and assembly of complex I. In Mus musculus (Mouse), this protein is NADH dehydrogenase [ubiquinone] iron-sulfur protein 8, mitochondrial (Ndufs8).